Reading from the N-terminus, the 632-residue chain is tRNA uridine 5-carboxymethylaminomethyl modification enzyme MnmG (632 aa).

FAD-binding positions include 15–20 (GAGHAG), I127, and S182. 276-290 (GPRYCPSIEDKIVRF) contributes to the NAD(+) binding site. Q373 serves as a coordination point for FAD.

Belongs to the MnmG family. Homodimer. Heterotetramer of two MnmE and two MnmG subunits. Requires FAD as cofactor.

It is found in the cytoplasm. Its function is as follows. NAD-binding protein involved in the addition of a carboxymethylaminomethyl (cmnm) group at the wobble position (U34) of certain tRNAs, forming tRNA-cmnm(5)s(2)U34. The sequence is that of tRNA uridine 5-carboxymethylaminomethyl modification enzyme MnmG from Streptococcus pyogenes serotype M2 (strain MGAS10270).